Reading from the N-terminus, the 183-residue chain is Shikimate kinase (183 aa).

Position 14–19 (14–19 (GAGKTT)) interacts with ATP. Residue threonine 18 coordinates Mg(2+). Aspartate 36, arginine 60, and glycine 82 together coordinate substrate. Residue arginine 120 coordinates ATP. Residue arginine 139 coordinates substrate. ATP is bound at residue glutamine 156.

This sequence belongs to the shikimate kinase family. As to quaternary structure, monomer. Mg(2+) is required as a cofactor.

It is found in the cytoplasm. It carries out the reaction shikimate + ATP = 3-phosphoshikimate + ADP + H(+). Its pathway is metabolic intermediate biosynthesis; chorismate biosynthesis; chorismate from D-erythrose 4-phosphate and phosphoenolpyruvate: step 5/7. In terms of biological role, catalyzes the specific phosphorylation of the 3-hydroxyl group of shikimic acid using ATP as a cosubstrate. The sequence is that of Shikimate kinase from Thiobacillus denitrificans (strain ATCC 25259 / T1).